An 862-amino-acid chain; its full sequence is Valine--tRNA ligase (862 aa).

Residues 44–53 (NVTGSLHMGH) carry the 'HIGH' region motif. C176, C179, C344, C347, C417, C420, C438, and C441 together coordinate Zn(2+). The 'KMSKS' region motif lies at 528 to 532 (KMSKS). K531 serves as a coordination point for ATP. Residues 802–862 (RRRQEKRLKE…RIREALSQIG (61 aa)) adopt a coiled-coil conformation.

This sequence belongs to the class-I aminoacyl-tRNA synthetase family. ValS type 1 subfamily. As to quaternary structure, monomer. Zn(2+) is required as a cofactor.

It localises to the cytoplasm. It carries out the reaction tRNA(Val) + L-valine + ATP = L-valyl-tRNA(Val) + AMP + diphosphate. In terms of biological role, catalyzes the attachment of valine to tRNA(Val). As ValRS can inadvertently accommodate and process structurally similar amino acids such as threonine, to avoid such errors, it has a 'posttransfer' editing activity that hydrolyzes mischarged Thr-tRNA(Val) in a tRNA-dependent manner. The polypeptide is Valine--tRNA ligase (Thermus thermophilus (strain ATCC 27634 / DSM 579 / HB8)).